The primary structure comprises 415 residues: Granaticin polyketide putative beta-ketoacyl synthase 2 (415 aa).

The 401-residue stretch at 6–406 folds into the Ketosynthase family 3 (KS3) domain; the sequence is RRRAVVTGLS…GFNSAVVVTL (401 aa).

Belongs to the thiolase-like superfamily. Beta-ketoacyl-ACP synthases family.

The protein operates within antibiotic biosynthesis; granaticin biosynthesis. This chain is Granaticin polyketide putative beta-ketoacyl synthase 2 (gra-orf2), found in Streptomyces violaceoruber.